Reading from the N-terminus, the 147-residue chain is UPF0306 protein YhbP (147 aa).

This sequence belongs to the UPF0306 family.

This chain is UPF0306 protein YhbP, found in Salmonella schwarzengrund (strain CVM19633).